A 460-amino-acid chain; its full sequence is Keratin, type I cytoskeletal 27 (460 aa).

Positions 1–83 (MSVRFSSASR…GNEHGLLSGN (83 aa)) are head. The tract at residues 84 to 119 (EKVTMQNLNDRLASYLDNVRALEEANADLEQKIKGW) is coil 1A. Residues 84 to 399 (EKVTMQNLND…RLIDGEDGSC (316 aa)) form the IF rod domain. A linker 1 region spans residues 120–141 (YEKFGPGSCRGLDHDYSRYFTV). A coil 1B region spans residues 142–233 (IDDLRNQIIS…KNHEEEMKAL (92 aa)). A linker 12 region spans residues 234-256 (QCAAGGNVNVEMNAAPGVDLTVL). Positions 257–395 (LNNMRAEYEA…ETYCRLIDGE (139 aa)) are coil 2. Positions 396-460 (DGSCTKSKGY…NMKSEQRVPS (65 aa)) are tail. The tract at residues 429–460 (DPRGKVPSSRVHTVEEKSTKVNNMKSEQRVPS) is disordered. Residues 448 to 460 (KVNNMKSEQRVPS) are compositionally biased toward polar residues.

This sequence belongs to the intermediate filament family. Heterotetramer of two type I and two type II keratins. Interacts with KRT6A to form filaments.

It localises to the cytoplasm. Its function is as follows. Essential for the proper assembly of type I and type II keratin protein complexes and formation of keratin intermediate filaments in the inner root sheath (irs). The sequence is that of Keratin, type I cytoskeletal 27 from Capra hircus (Goat).